The following is a 508-amino-acid chain: Photosystem II CP47 reaction center protein (508 aa).

Transmembrane regions (helical) follow at residues 21–36 (SVHIMHTALVSGWAGS), 101–115 (IVFSGLCFLAAIWHW), 140–156 (GIHLFLSGVACFGFGAF), 203–218 (IAAGTLGILAGLFHLS), 237–252 (VLSSSIAAVFFAAFVV), and 457–472 (TFALLFFFGHIWHGAR).

Belongs to the PsbB/PsbC family. PsbB subfamily. PSII is composed of 1 copy each of membrane proteins PsbA, PsbB, PsbC, PsbD, PsbE, PsbF, PsbH, PsbI, PsbJ, PsbK, PsbL, PsbM, PsbT, PsbX, PsbY, PsbZ, Psb30/Ycf12, at least 3 peripheral proteins of the oxygen-evolving complex and a large number of cofactors. It forms dimeric complexes. It depends on Binds multiple chlorophylls. PSII binds additional chlorophylls, carotenoids and specific lipids. as a cofactor.

The protein localises to the plastid. The protein resides in the chloroplast thylakoid membrane. In terms of biological role, one of the components of the core complex of photosystem II (PSII). It binds chlorophyll and helps catalyze the primary light-induced photochemical processes of PSII. PSII is a light-driven water:plastoquinone oxidoreductase, using light energy to abstract electrons from H(2)O, generating O(2) and a proton gradient subsequently used for ATP formation. This is Photosystem II CP47 reaction center protein from Calycanthus floridus var. glaucus (Eastern sweetshrub).